We begin with the raw amino-acid sequence, 278 residues long: Tryptophan synthase alpha chain (278 aa).

Active-site proton acceptor residues include Glu50 and Asp61.

It belongs to the TrpA family. In terms of assembly, tetramer of two alpha and two beta chains.

The catalysed reaction is (1S,2R)-1-C-(indol-3-yl)glycerol 3-phosphate + L-serine = D-glyceraldehyde 3-phosphate + L-tryptophan + H2O. It functions in the pathway amino-acid biosynthesis; L-tryptophan biosynthesis; L-tryptophan from chorismate: step 5/5. The alpha subunit is responsible for the aldol cleavage of indoleglycerol phosphate to indole and glyceraldehyde 3-phosphate. The polypeptide is Tryptophan synthase alpha chain (Rhodopseudomonas palustris (strain BisB5)).